A 314-amino-acid polypeptide reads, in one-letter code: Ribosomal RNA small subunit methyltransferase H (314 aa).

S-adenosyl-L-methionine is bound by residues 34–36 (GGH), D54, F83, D104, and Q111.

The protein belongs to the methyltransferase superfamily. RsmH family.

The protein resides in the cytoplasm. It catalyses the reaction cytidine(1402) in 16S rRNA + S-adenosyl-L-methionine = N(4)-methylcytidine(1402) in 16S rRNA + S-adenosyl-L-homocysteine + H(+). Functionally, specifically methylates the N4 position of cytidine in position 1402 (C1402) of 16S rRNA. The sequence is that of Ribosomal RNA small subunit methyltransferase H from Ligilactobacillus salivarius (strain UCC118) (Lactobacillus salivarius).